We begin with the raw amino-acid sequence, 203 residues long: Ribonuclease HII (203 aa).

Positions 14–203 (GVIAGVDEVG…ILNSTKRALL (190 aa)) constitute an RNase H type-2 domain. A divalent metal cation-binding residues include Asp-20, Glu-21, and Asp-112.

Belongs to the RNase HII family. It depends on Mn(2+) as a cofactor. Mg(2+) serves as cofactor.

The protein resides in the cytoplasm. The catalysed reaction is Endonucleolytic cleavage to 5'-phosphomonoester.. Its function is as follows. Endonuclease that specifically degrades the RNA of RNA-DNA hybrids. This chain is Ribonuclease HII, found in Wolbachia sp. subsp. Brugia malayi (strain TRS).